A 138-amino-acid polypeptide reads, in one-letter code: Basic phospholipase A2 homolog acutohaemolysin (138 aa).

A signal peptide spans Met1–Gly16. 7 disulfides stabilise this stretch: Cys42–Cys131, Cys44–Cys60, Cys59–Cys111, Cys65–Cys138, Cys66–Cys104, Cys73–Cys97, and Cys91–Cys102. The segment at Lys121–Lys133 is important for membrane-damaging activities in eukaryotes and bacteria; heparin-binding.

In terms of assembly, monomer. In terms of tissue distribution, expressed by the venom gland.

It is found in the secreted. In terms of biological role, snake venom phospholipase A2 homolog that lacks enzymatic activity. Is myotoxic. Has a strong indirect hemolytic activity and anticoagulant activity. A model of myotoxic mechanism has been proposed: an apo Lys49-PLA2 is activated by the entrance of a hydrophobic molecule (e.g. fatty acid) at the hydrophobic channel of the protein leading to a reorientation of a monomer. This reorientation causes a transition between 'inactive' to 'active' states, causing alignment of C-terminal and membrane-docking sites (MDoS) side-by-side and putting the membrane-disruption sites (MDiS) in the same plane, exposed to solvent and in a symmetric position for both monomers. The MDoS region stabilizes the toxin on membrane by the interaction of charged residues with phospholipid head groups. Subsequently, the MDiS region destabilizes the membrane with penetration of hydrophobic residues. This insertion causes a disorganization of the membrane, allowing an uncontrolled influx of ions (i.e. calcium and sodium), and eventually triggering irreversible intracellular alterations and cell death. In Deinagkistrodon acutus (Hundred-pace snake), this protein is Basic phospholipase A2 homolog acutohaemolysin.